The sequence spans 113 residues: Nitrogenase-stabilizing/protective protein NifW (113 aa).

Belongs to the NifW family. In terms of assembly, homotrimer; associates with NifD.

In terms of biological role, may protect the nitrogenase Fe-Mo protein from oxidative damage. The protein is Nitrogenase-stabilizing/protective protein NifW of Polaromonas naphthalenivorans (strain CJ2).